Here is a 534-residue protein sequence, read N- to C-terminus: Solute carrier family 22 member 15 (534 aa).

Residues phenylalanine 22–leucine 42 traverse the membrane as a helical segment. Asparagine 52, asparagine 58, and asparagine 83 each carry an N-linked (GlcNAc...) asparagine glycan. A run of 11 helical transmembrane segments spans residues alanine 97 to isoleucine 117, leucine 136 to leucine 156, leucine 161 to isoleucine 181, serine 191 to isoleucine 211, leucine 216 to proline 236, threonine 297 to serine 317, leucine 327 to isoleucine 347, glycine 356 to proline 376, threonine 391 to serine 411, methionine 424 to leucine 444, and alanine 450 to leucine 470. Asparagine 513 is a glycosylation site (N-linked (GlcNAc...) asparagine).

It belongs to the major facilitator (TC 2.A.1) superfamily. Organic cation transporter (TC 2.A.1.19) family.

Its subcellular location is the membrane. Its function is as follows. Probably transports organic cations. In Xenopus tropicalis (Western clawed frog), this protein is Solute carrier family 22 member 15 (slc22a15).